Here is a 105-residue protein sequence, read N- to C-terminus: Large ribosomal subunit protein uL24 (105 aa).

The protein belongs to the universal ribosomal protein uL24 family. Part of the 50S ribosomal subunit.

Its function is as follows. One of two assembly initiator proteins, it binds directly to the 5'-end of the 23S rRNA, where it nucleates assembly of the 50S subunit. In terms of biological role, one of the proteins that surrounds the polypeptide exit tunnel on the outside of the subunit. This Staphylococcus haemolyticus (strain JCSC1435) protein is Large ribosomal subunit protein uL24.